The following is a 611-amino-acid chain: Dihydroxy-acid dehydratase (611 aa).

Residue Asp-82 participates in Mg(2+) binding. [2Fe-2S] cluster is bound at residue Cys-123. Mg(2+)-binding residues include Asp-124 and Lys-125. Lys-125 bears the N6-carboxylysine mark. Residue Cys-192 coordinates [2Fe-2S] cluster. Glu-489 contacts Mg(2+). Ser-515 acts as the Proton acceptor in catalysis. The segment covering 565 to 574 (ERRKAEEARG) has biased composition (basic and acidic residues). The tract at residues 565–586 (ERRKAEEARGKKAFTPPTRQRE) is disordered.

Belongs to the IlvD/Edd family. As to quaternary structure, homodimer. [2Fe-2S] cluster is required as a cofactor. Requires Mg(2+) as cofactor.

It catalyses the reaction (2R)-2,3-dihydroxy-3-methylbutanoate = 3-methyl-2-oxobutanoate + H2O. The catalysed reaction is (2R,3R)-2,3-dihydroxy-3-methylpentanoate = (S)-3-methyl-2-oxopentanoate + H2O. The protein operates within amino-acid biosynthesis; L-isoleucine biosynthesis; L-isoleucine from 2-oxobutanoate: step 3/4. Its pathway is amino-acid biosynthesis; L-valine biosynthesis; L-valine from pyruvate: step 3/4. In terms of biological role, functions in the biosynthesis of branched-chain amino acids. Catalyzes the dehydration of (2R,3R)-2,3-dihydroxy-3-methylpentanoate (2,3-dihydroxy-3-methylvalerate) into 2-oxo-3-methylpentanoate (2-oxo-3-methylvalerate) and of (2R)-2,3-dihydroxy-3-methylbutanoate (2,3-dihydroxyisovalerate) into 2-oxo-3-methylbutanoate (2-oxoisovalerate), the penultimate precursor to L-isoleucine and L-valine, respectively. The sequence is that of Dihydroxy-acid dehydratase from Parabacteroides distasonis (strain ATCC 8503 / DSM 20701 / CIP 104284 / JCM 5825 / NCTC 11152).